A 141-amino-acid chain; its full sequence is Sec-independent protein translocase protein TatB (141 aa).

The chain crosses the membrane as a helical span at residues F2–G22. The disordered stretch occupies residues I92 to T141. Residues P117–T141 are compositionally biased toward low complexity.

It belongs to the TatB family. In terms of assembly, the Tat system comprises two distinct complexes: a TatABC complex, containing multiple copies of TatA, TatB and TatC subunits, and a separate TatA complex, containing only TatA subunits. Substrates initially bind to the TatABC complex, which probably triggers association of the separate TatA complex to form the active translocon.

The protein resides in the cell membrane. Functionally, part of the twin-arginine translocation (Tat) system that transports large folded proteins containing a characteristic twin-arginine motif in their signal peptide across membranes. Together with TatC, TatB is part of a receptor directly interacting with Tat signal peptides. TatB may form an oligomeric binding site that transiently accommodates folded Tat precursor proteins before their translocation. This chain is Sec-independent protein translocase protein TatB, found in Mycolicibacterium gilvum (strain PYR-GCK) (Mycobacterium gilvum (strain PYR-GCK)).